A 2155-amino-acid polypeptide reads, in one-letter code: Conidial pigment polyketide synthase PfmaE (2155 aa).

Residues 8–245 (LLFGDQSLDT…TAIPVYGPYH (238 aa)) are N-terminal acylcarrier protein transacylase domain (SAT). The 433-residue stretch at 381–813 (KCKLAIVGMA…GGNTGLLLED (433 aa)) folds into the Ketosynthase family 3 (KS3) domain. Active-site for beta-ketoacyl synthase activity residues include cysteine 553, histidine 688, and histidine 731. Positions 910–1231 (AFMFTGQGSH…LCTLHSAGLN (322 aa)) are malonyl-CoA:ACP transacylase (MAT) domain. Serine 1001 (for acyl/malonyl transferase activity) is an active-site residue. Residues 1293-1608 (TTTVQKVVRE…PRKVLNVVLP (316 aa)) are product template (PT) domain. The segment at 1297-1428 (QKVVREEVKG…CKVFFGDNEE (132 aa)) is N-terminal hotdog fold. Residues 1297–1604 (QKVVREEVKG…FQAIPRKVLN (308 aa)) enclose the PKS/mFAS DH domain. Catalysis depends on histidine 1329, which acts as the Proton acceptor; for dehydratase activity. Positions 1455–1604 (DASKIGRGLA…FQAIPRKVLN (150 aa)) are C-terminal hotdog fold. Catalysis depends on aspartate 1516, which acts as the Proton donor; for dehydratase activity. Carrier domains lie at 1653–1730 (LTKN…AQFE) and 1779–1856 (GNVS…GIED). Position 1690 is an O-(pantetheine 4'-phosphoryl)serine (serine 1690). The disordered stretch occupies residues 1738 to 1782 (EENAHSSASSDSADMETESNFTTPSDDSEKDEVKGDAPAADGNVS). Serine 1816 is modified (O-(pantetheine 4'-phosphoryl)serine). The tract at residues 1855–1892 (EDKPKRAAPKSAKQEPAKPEPKVQGEAKAHTNPVDNYP) is disordered. Residues 1866–1883 (AKQEPAKPEPKVQGEAKA) are compositionally biased toward basic and acidic residues. The segment at 1911-2041 (QLFMIPDGSG…LGEGDDAEAK (131 aa)) is thioesterase (TE) domain.

The protein operates within pigment biosynthesis; melanin biosynthesis. Non-reducing polyketide synthase; part of the gene cluster that mediates the biosynthesis of dihydroxynaphthalene (DHN)-melanin, a bluish-green pigment forming a dark layer in the conidial wall that protects the conidia from UV radiations. The first step of the pathway is the production of the pentaketide 1,3,6,8-tetrahydroxynaphthalene (1,3,6,8-THN or T4HN) by the polyketide synthase PfmaE though condensation of acetyl-CoA with malonyl-CoA. T4HN is not stable and easily oxidizes into the stable form flaviolin. T4HN is also substrate of the hydroxynaphthalene reductase PfmaG to yield scytalone. The scytalone dehydratase PfmaJ then reduces scytalone to 1,3,8-THN. 1,3,8-THN is then substrate of the hydroxynaphthalene reductase PfmaI to yield vermelone. Vermelone is further converted by the multicopper oxidase PfmaD to 1,8-DHN. Finally the laccase PFICI_06862 transforms 1,8-DHN to DHN-melanin. The roles of the 5-oxoprolinase PfmaA and the proline iminopeptidase PfmaB within the cluster have not been elucidated yet. This chain is Conidial pigment polyketide synthase PfmaE, found in Pestalotiopsis fici (strain W106-1 / CGMCC3.15140).